A 395-amino-acid polypeptide reads, in one-letter code: Chaperone protein DnaJ (395 aa).

The 66-residue stretch at 4 to 69 (DYYEVLGLSR…DKRRRYDQFG (66 aa)) folds into the J domain. The CR-type zinc-finger motif lies at 151 to 232 (GVEKTLKIKK…CYGEGIKQGE (82 aa)). Zn(2+) is bound by residues C164, C167, C180, C183, C206, C209, C220, and C223. CXXCXGXG motif repeat units lie at residues 164–171 (CTECNGTG), 180–187 (CPTCHGSG), 206–213 (CPTCGGEG), and 220–227 (CVSCYGEG).

It belongs to the DnaJ family. In terms of assembly, homodimer. Zn(2+) is required as a cofactor.

It is found in the cytoplasm. In terms of biological role, participates actively in the response to hyperosmotic and heat shock by preventing the aggregation of stress-denatured proteins and by disaggregating proteins, also in an autonomous, DnaK-independent fashion. Unfolded proteins bind initially to DnaJ; upon interaction with the DnaJ-bound protein, DnaK hydrolyzes its bound ATP, resulting in the formation of a stable complex. GrpE releases ADP from DnaK; ATP binding to DnaK triggers the release of the substrate protein, thus completing the reaction cycle. Several rounds of ATP-dependent interactions between DnaJ, DnaK and GrpE are required for fully efficient folding. Also involved, together with DnaK and GrpE, in the DNA replication of plasmids through activation of initiation proteins. This Chlorobium phaeobacteroides (strain DSM 266 / SMG 266 / 2430) protein is Chaperone protein DnaJ.